Reading from the N-terminus, the 722-residue chain is Polyribonucleotide nucleotidyltransferase (722 aa).

2 residues coordinate Mg(2+): aspartate 505 and aspartate 511. Residues 572–631 (PSITTIKIHPDKIRDVIGKGGATIRGICDETGASIDLDDDGNVKIYADNAAAAQAAVNRV) form the KH domain. The S1 motif domain occupies 641 to 709 (GAIYKGRVER…NRGRVKLSMK (69 aa)).

Belongs to the polyribonucleotide nucleotidyltransferase family. As to quaternary structure, component of the RNA degradosome, which is a multiprotein complex involved in RNA processing and mRNA degradation. It depends on Mg(2+) as a cofactor.

Its subcellular location is the cytoplasm. It carries out the reaction RNA(n+1) + phosphate = RNA(n) + a ribonucleoside 5'-diphosphate. In terms of biological role, involved in mRNA degradation. Catalyzes the phosphorolysis of single-stranded polyribonucleotides processively in the 3'- to 5'-direction. This Marinobacter nauticus (strain ATCC 700491 / DSM 11845 / VT8) (Marinobacter aquaeolei) protein is Polyribonucleotide nucleotidyltransferase.